A 126-amino-acid polypeptide reads, in one-letter code: MLVINMKEDLERALKNKEPSFIIKGELAEKMKKAQRITTIDKWILGALAFVFAVSFFPSTSDGLFGIIMNKILIAIGIFATFEIAIILAVILGGMTLAMMLYKNYHAEFGTDVKTEKITIKCTIKK.

A run of 2 helical transmembrane segments spans residues 40-57 and 72-94; these read IDKW…VSFF and ILIA…ILGG.

Its subcellular location is the cell membrane. This is an uncharacterized protein from Pasteurella multocida (strain Pm70).